We begin with the raw amino-acid sequence, 329 residues long: Delta-aminolevulinic acid dehydratase (329 aa).

The Zn(2+) site is built by cysteine 122, cysteine 124, histidine 131, and cysteine 132. Lysine 199 serves as the catalytic Schiff-base intermediate with substrate. Lysine 199 is subject to N6-succinyllysine. Arginine 209 serves as a coordination point for 5-aminolevulinate. At serine 215 the chain carries Phosphoserine. A 5-aminolevulinate-binding site is contributed by arginine 221. Cysteine 223 serves as a coordination point for Zn(2+). Lysine 252 (schiff-base intermediate with substrate) is an active-site residue. Lysine 252 is modified (N6-succinyllysine). 2 residues coordinate 5-aminolevulinate: serine 279 and tyrosine 318.

This sequence belongs to the ALAD family. In terms of assembly, homooctamer; active form. Homohexamer; low activity form. It depends on Zn(2+) as a cofactor.

It localises to the cytoplasm. The protein localises to the cytosol. It catalyses the reaction 2 5-aminolevulinate = porphobilinogen + 2 H2O + H(+). Its pathway is porphyrin-containing compound metabolism; protoporphyrin-IX biosynthesis; coproporphyrinogen-III from 5-aminolevulinate: step 1/4. Its activity is regulated as follows. Can alternate between a fully active homooctamer and a low-activity homohexamer. A bound magnesium ion may promote the assembly of the fully active homooctamer. The magnesium-binding site is absent in the low-activity homohexamer. Inhibited by compounds that favor the hexameric state. Inhibited by divalent lead ions. The lead ions partially displace the zinc cofactor. Functionally, catalyzes an early step in the biosynthesis of tetrapyrroles. Binds two molecules of 5-aminolevulinate per subunit, each at a distinct site, and catalyzes their condensation to form porphobilinogen. The protein is Delta-aminolevulinic acid dehydratase (ALAD) of Bos taurus (Bovine).